Reading from the N-terminus, the 148-residue chain is Large ribosomal subunit protein uL13 (148 aa).

Basic and acidic residues-rich tracts occupy residues 71-81 (GKKEKQKEYHE) and 89-99 (DHSHSPEEMRA). Disordered regions lie at residues 71–99 (GKKE…EMRA) and 125–148 (KKLK…LDNA).

This sequence belongs to the universal ribosomal protein uL13 family. Part of the 50S ribosomal subunit.

Functionally, this protein is one of the early assembly proteins of the 50S ribosomal subunit, although it is not seen to bind rRNA by itself. It is important during the early stages of 50S assembly. In Salinibacter ruber (strain DSM 13855 / M31), this protein is Large ribosomal subunit protein uL13.